The chain runs to 116 residues: Large ribosomal subunit protein uL24 (116 aa).

This sequence belongs to the universal ribosomal protein uL24 family. Part of the 50S ribosomal subunit.

In terms of biological role, one of two assembly initiator proteins, it binds directly to the 5'-end of the 23S rRNA, where it nucleates assembly of the 50S subunit. One of the proteins that surrounds the polypeptide exit tunnel on the outside of the subunit. In Protochlamydia amoebophila (strain UWE25), this protein is Large ribosomal subunit protein uL24.